The chain runs to 665 residues: Probable potassium transport system protein Kup (665 aa).

Residues 1–18 are compositionally biased toward low complexity; the sequence is MASEAPHASAPDCAPASS. The interval 1 to 31 is disordered; that stretch reads MASEAPHASAPDCAPASSDIPQQDGGSTNGH. The next 12 helical transmembrane spans lie at 40 to 60, 83 to 103, 131 to 151, 171 to 191, 202 to 222, 245 to 265, 281 to 301, 332 to 352, 380 to 400, 409 to 429, 435 to 455, and 462 to 482; these read FFAL…TSPL, VVSL…VVFI, LVFV…VITP, GVTN…LFFI, LFGP…LMNL, GLTG…VEAL, WLFF…AFAL, LVLL…TGAF, IFVP…MFTF, AYGL…FIVM, WSMP…ITFL, and FFSG…IMAT.

Belongs to the HAK/KUP transporter (TC 2.A.72) family.

It is found in the cell inner membrane. The catalysed reaction is K(+)(in) + H(+)(in) = K(+)(out) + H(+)(out). Functionally, transport of potassium into the cell. Likely operates as a K(+):H(+) symporter. In Caulobacter vibrioides (strain ATCC 19089 / CIP 103742 / CB 15) (Caulobacter crescentus), this protein is Probable potassium transport system protein Kup.